A 322-amino-acid polypeptide reads, in one-letter code: Phosphatidylserine decarboxylase proenzyme (322 aa).

Active-site charge relay system; for autoendoproteolytic cleavage activity residues include D90, H147, and S254. S254 (schiff-base intermediate with substrate; via pyruvic acid; for decarboxylase activity) is an active-site residue. S254 is subject to Pyruvic acid (Ser); by autocatalysis. The tract at residues 293–322 is disordered; sequence PDAEPAPLPAEEIEAEHDASPLVDDKKDQV. Over residues 308–322 the composition is skewed to basic and acidic residues; it reads EHDASPLVDDKKDQV.

It belongs to the phosphatidylserine decarboxylase family. PSD-B subfamily. Prokaryotic type I sub-subfamily. In terms of assembly, heterodimer of a large membrane-associated beta subunit and a small pyruvoyl-containing alpha subunit. Pyruvate is required as a cofactor. Post-translationally, is synthesized initially as an inactive proenzyme. Formation of the active enzyme involves a self-maturation process in which the active site pyruvoyl group is generated from an internal serine residue via an autocatalytic post-translational modification. Two non-identical subunits are generated from the proenzyme in this reaction, and the pyruvate is formed at the N-terminus of the alpha chain, which is derived from the carboxyl end of the proenzyme. The autoendoproteolytic cleavage occurs by a canonical serine protease mechanism, in which the side chain hydroxyl group of the serine supplies its oxygen atom to form the C-terminus of the beta chain, while the remainder of the serine residue undergoes an oxidative deamination to produce ammonia and the pyruvoyl prosthetic group on the alpha chain. During this reaction, the Ser that is part of the protease active site of the proenzyme becomes the pyruvoyl prosthetic group, which constitutes an essential element of the active site of the mature decarboxylase.

The protein localises to the cell membrane. The enzyme catalyses a 1,2-diacyl-sn-glycero-3-phospho-L-serine + H(+) = a 1,2-diacyl-sn-glycero-3-phosphoethanolamine + CO2. The protein operates within phospholipid metabolism; phosphatidylethanolamine biosynthesis; phosphatidylethanolamine from CDP-diacylglycerol: step 2/2. Catalyzes the formation of phosphatidylethanolamine (PtdEtn) from phosphatidylserine (PtdSer). The protein is Phosphatidylserine decarboxylase proenzyme of Escherichia coli O45:K1 (strain S88 / ExPEC).